The chain runs to 280 residues: 2-dehydro-3-deoxyphosphooctonate aldolase (280 aa).

This sequence belongs to the KdsA family.

The protein localises to the cytoplasm. It carries out the reaction D-arabinose 5-phosphate + phosphoenolpyruvate + H2O = 3-deoxy-alpha-D-manno-2-octulosonate-8-phosphate + phosphate. It functions in the pathway carbohydrate biosynthesis; 3-deoxy-D-manno-octulosonate biosynthesis; 3-deoxy-D-manno-octulosonate from D-ribulose 5-phosphate: step 2/3. Its pathway is bacterial outer membrane biogenesis; lipopolysaccharide biosynthesis. The sequence is that of 2-dehydro-3-deoxyphosphooctonate aldolase from Rhizobium meliloti (strain 1021) (Ensifer meliloti).